Here is a 52-residue protein sequence, read N- to C-terminus: MSETDGEAEETGQTHECRRCGREQGLVGKYDIWLCRQCFREIARSMGFKKYS.

Residues C17, C20, C35, and C38 each coordinate Zn(2+).

Belongs to the universal ribosomal protein uS14 family. Zinc-binding uS14 subfamily. In terms of assembly, part of the 30S ribosomal subunit. Zn(2+) serves as cofactor.

Functionally, binds 16S rRNA, required for the assembly of 30S particles. In Halobacterium salinarum (strain ATCC 700922 / JCM 11081 / NRC-1) (Halobacterium halobium), this protein is Small ribosomal subunit protein uS14.